We begin with the raw amino-acid sequence, 639 residues long: Chaperone protein DnaK (639 aa).

Thr-198 carries the phosphothreonine; by autocatalysis modification. Residues 603–618 show a composition bias toward low complexity; sequence AKAQTQGGAQEGAAKQ. A disordered region spans residues 603–639; sequence AKAQTQGGAQEGAAKQSNATADDVVDAEFEEVKDDKK. Over residues 625–639 the composition is skewed to acidic residues; sequence DVVDAEFEEVKDDKK.

Belongs to the heat shock protein 70 family.

Its function is as follows. Acts as a chaperone. The protein is Chaperone protein DnaK of Shewanella oneidensis (strain ATCC 700550 / JCM 31522 / CIP 106686 / LMG 19005 / NCIMB 14063 / MR-1).